Reading from the N-terminus, the 176-residue chain is Probable chemoreceptor glutamine deamidase CheD (176 aa).

This sequence belongs to the CheD family.

The enzyme catalyses L-glutaminyl-[protein] + H2O = L-glutamyl-[protein] + NH4(+). Its function is as follows. Probably deamidates glutamine residues to glutamate on methyl-accepting chemotaxis receptors (MCPs), playing an important role in chemotaxis. The protein is Probable chemoreceptor glutamine deamidase CheD of Rhodospirillum rubrum (strain ATCC 11170 / ATH 1.1.1 / DSM 467 / LMG 4362 / NCIMB 8255 / S1).